The following is a 764-amino-acid chain: Bifunctional type I diterpene synthase tndC (764 aa).

Positions 1 to 324 (MEYRYSTVVD…CPRYHPWSSY (324 aa)) are terpene cyclase. The Mg(2+) site is built by D92 and D96. Positions 92-96 (DDVTD) match the DDXXD 1 motif. Residues 224–232 (NDLYSWQKE) carry the NSE/DTE motif. The tract at residues 325–761 (NERQLDWMKN…FQLRLILEML (437 aa)) is prenyltransferase. The tract at residues 377–403 (AVNGNGASHTSSIKGSTGGNGVTHSPV) is disordered. Residues 381-391 (NGASHTSSIKG) are compositionally biased toward polar residues. K484, R487, and H516 together coordinate isopentenyl diphosphate. Residues D523 and D527 each coordinate Mg(2+). Residues 523–527 (DDLED) carry the DDXXD 2 motif. R532 serves as a coordination point for dimethylallyl diphosphate. Position 533 (R533) interacts with isopentenyl diphosphate. Residues K610, T611, Q646, N653, K663, and K673 each contribute to the dimethylallyl diphosphate site.

This sequence in the N-terminal section; belongs to the terpene synthase family. It in the C-terminal section; belongs to the FPP/GGPP synthase family.

The catalysed reaction is isopentenyl diphosphate + (2E,6E)-farnesyl diphosphate = (2E,6E,10E)-geranylgeranyl diphosphate + diphosphate. It carries out the reaction (2E,6E,10E)-geranylgeranyl diphosphate = talarodiene + diphosphate. It functions in the pathway secondary metabolite biosynthesis; terpenoid biosynthesis. In terms of biological role, bifunctional type I diterpene synthase; part of the gene cluster that mediates the biosynthesis of talaronoid C, a fusicoccane diterpenoid with an unprecedented tricyclic 5/8/6 ring system. The first step in the pathway is performed by the fusicoccadiene synthase tndC that possesses both prenyl transferase and terpene cyclase activity, converting isopentenyl diphosphate and dimethylallyl diphosphate into geranylgeranyl diphosphate (GGDP) and further converting GGDP into talarodiene, a precursor for talaronoid C. The remaining enzymes from the cluster include the cytochrome P450 monooxygenase tndB, the aldehyde reductase tndE and the alcohol dehydrogenase tndF that are involved in the conversion of talarodiene into talaronoid C. This is Bifunctional type I diterpene synthase tndC from Aspergillus flavipes.